A 692-amino-acid polypeptide reads, in one-letter code: Proprotein convertase subtilisin/kexin type 9 (692 aa).

An N-terminal signal peptide occupies residues 1–30 (MGTVSSRRSWWPLPLLLLLLLLLGPAGARA). A propeptide spanning residues 31 to 152 (QEDEDGDYEE…IEEDSSVFAQ (122 aa)) is cleaved from the precursor. Tyr38 carries the sulfotyrosine modification. Ser47 carries the post-translational modification Phosphoserine. The Inhibitor I9 domain occupies 77–149 (TYVVVLKEET…VDYIEEDSSV (73 aa)). In terms of domain architecture, Peptidase S8 spans 155–461 (PWNLERITPP…GWQLFCRTVW (307 aa)). Catalysis depends on charge relay system residues Asp186 and His226. 2 cysteine pairs are disulfide-bonded: Cys223–Cys255 and Cys323–Cys358. Ser386 serves as the catalytic Charge relay system. Residues 450 to 692 (GAGWQLFCRT…HLAQASQELQ (243 aa)) are C-terminal domain. Cystine bridges form between Cys457–Cys527, Cys477–Cys526, and Cys486–Cys509. N-linked (GlcNAc...) asparagine glycosylation is present at Asn533. 6 disulfide bridges follow: Cys534–Cys601, Cys552–Cys600, Cys562–Cys588, Cys608–Cys679, Cys626–Cys678, and Cys635–Cys654. A Phosphoserine modification is found at Ser688.

It belongs to the peptidase S8 family. Monomer. Can self-associate to form dimers and higher multimers which may have increased LDLR degrading activity. The precursor protein but not the mature protein may form multimers. Interacts with APOB, VLDLR, LRP8/APOER2 and BACE1. The full-length immature form (pro-PCSK9) interacts with SCNN1A, SCNN1B and SCNN1G. The pro-PCSK9 form (via C-terminal domain) interacts with LDLR. Interacts (via the C-terminal domain) with ANXA2 (via repeat Annexin 1); the interaction inhibits the degradation of LDLR. It depends on Ca(2+) as a cofactor. In terms of processing, cleavage by furin and PCSK5 generates a truncated inactive protein that is unable to induce LDLR degradation. Post-translationally, undergoes autocatalytic cleavage in the endoplasmic reticulum to release the propeptide from the N-terminus and the cleavage of the propeptide is strictly required for its maturation and activation. The cleaved propeptide however remains associated with the catalytic domain through non-covalent interactions, preventing potential substrates from accessing its active site. As a result, it is secreted from cells as a propeptide-containing, enzymatically inactive protein. Phosphorylation protects the propeptide against proteolysis.

The protein resides in the cytoplasm. Its subcellular location is the secreted. The protein localises to the endosome. It localises to the lysosome. It is found in the cell surface. The protein resides in the endoplasmic reticulum. Its subcellular location is the golgi apparatus. Its activity is regulated as follows. Its proteolytic activity is autoinhibited by the non-covalent binding of the propeptide to the catalytic domain. Inhibited by EGTA. In terms of biological role, crucial player in the regulation of plasma cholesterol homeostasis. Binds to low-density lipid receptor family members: low density lipoprotein receptor (LDLR), very low density lipoprotein receptor (VLDLR), apolipoprotein E receptor (LRP1/APOER) and apolipoprotein receptor 2 (LRP8/APOER2), and promotes their degradation in intracellular acidic compartments. Acts via a non-proteolytic mechanism to enhance the degradation of the hepatic LDLR through a clathrin LDLRAP1/ARH-mediated pathway. May prevent the recycling of LDLR from endosomes to the cell surface or direct it to lysosomes for degradation. Can induce ubiquitination of LDLR leading to its subsequent degradation. Inhibits intracellular degradation of APOB via the autophagosome/lysosome pathway in a LDLR-independent manner. Involved in the disposal of non-acetylated intermediates of BACE1 in the early secretory pathway. Inhibits epithelial Na(+) channel (ENaC)-mediated Na(+) absorption by reducing ENaC surface expression primarily by increasing its proteasomal degradation. Regulates neuronal apoptosis via modulation of LRP8/APOER2 levels and related anti-apoptotic signaling pathways. The chain is Proprotein convertase subtilisin/kexin type 9 (PCSK9) from Pan troglodytes (Chimpanzee).